The following is a 159-amino-acid chain: SsrA-binding protein (159 aa).

A disordered region spans residues 134–159 (KLHDKRETSKERDWNRQKNRLLKERG). Basic and acidic residues predominate over residues 137 to 159 (DKRETSKERDWNRQKNRLLKERG).

Belongs to the SmpB family.

It localises to the cytoplasm. In terms of biological role, required for rescue of stalled ribosomes mediated by trans-translation. Binds to transfer-messenger RNA (tmRNA), required for stable association of tmRNA with ribosomes. tmRNA and SmpB together mimic tRNA shape, replacing the anticodon stem-loop with SmpB. tmRNA is encoded by the ssrA gene; the 2 termini fold to resemble tRNA(Ala) and it encodes a 'tag peptide', a short internal open reading frame. During trans-translation Ala-aminoacylated tmRNA acts like a tRNA, entering the A-site of stalled ribosomes, displacing the stalled mRNA. The ribosome then switches to translate the ORF on the tmRNA; the nascent peptide is terminated with the 'tag peptide' encoded by the tmRNA and targeted for degradation. The ribosome is freed to recommence translation, which seems to be the essential function of trans-translation. This Rhizobium meliloti (strain 1021) (Ensifer meliloti) protein is SsrA-binding protein.